Consider the following 91-residue polypeptide: Small ribosomal subunit protein uS19 (91 aa).

Residues 1–32 (MPRSIKKGPFIDEHLDRKVQSAQASNSRRPIK) are disordered. Over residues 9–19 (PFIDEHLDRKV) the composition is skewed to basic and acidic residues.

It belongs to the universal ribosomal protein uS19 family.

Functionally, protein S19 forms a complex with S13 that binds strongly to the 16S ribosomal RNA. The polypeptide is Small ribosomal subunit protein uS19 (Acidithiobacillus ferrooxidans (strain ATCC 53993 / BNL-5-31) (Leptospirillum ferrooxidans (ATCC 53993))).